A 485-amino-acid chain; its full sequence is NADH-quinone oxidoreductase subunit N (485 aa).

The next 14 helical transmembrane spans lie at 10–30 (AMLP…SIAW), 35–55 (FINA…LYFV), 75–95 (FYIG…YPWL), 104–124 (EFYL…SANH), 125–145 (LASL…LIGY), 159–179 (YMLL…LLYA), 203–223 (ILAG…LVPF), 235–255 (PAPV…AVVM), 271–291 (LVLS…AISQ), 297–317 (LLGY…VAVQ), 327–347 (GVYL…VSLM), 374–394 (AVMT…GFIG), 408–427 (WWLT…YYLR), and 449–469 (ALTA…VLGI).

The protein belongs to the complex I subunit 2 family. As to quaternary structure, NDH-1 is composed of 13 different subunits. Subunits NuoA, H, J, K, L, M, N constitute the membrane sector of the complex.

It is found in the cell inner membrane. The catalysed reaction is a quinone + NADH + 5 H(+)(in) = a quinol + NAD(+) + 4 H(+)(out). Functionally, NDH-1 shuttles electrons from NADH, via FMN and iron-sulfur (Fe-S) centers, to quinones in the respiratory chain. The immediate electron acceptor for the enzyme in this species is believed to be ubiquinone. Couples the redox reaction to proton translocation (for every two electrons transferred, four hydrogen ions are translocated across the cytoplasmic membrane), and thus conserves the redox energy in a proton gradient. The chain is NADH-quinone oxidoreductase subunit N from Yersinia enterocolitica serotype O:8 / biotype 1B (strain NCTC 13174 / 8081).